Reading from the N-terminus, the 141-residue chain is 3-hydroxyacyl-[acyl-carrier-protein] dehydratase FabZ (141 aa).

The active site involves His49.

It belongs to the thioester dehydratase family. FabZ subfamily.

The protein resides in the cytoplasm. The enzyme catalyses a (3R)-hydroxyacyl-[ACP] = a (2E)-enoyl-[ACP] + H2O. In terms of biological role, involved in unsaturated fatty acids biosynthesis. Catalyzes the dehydration of short chain beta-hydroxyacyl-ACPs and long chain saturated and unsaturated beta-hydroxyacyl-ACPs. The sequence is that of 3-hydroxyacyl-[acyl-carrier-protein] dehydratase FabZ from Clostridium acetobutylicum (strain ATCC 824 / DSM 792 / JCM 1419 / IAM 19013 / LMG 5710 / NBRC 13948 / NRRL B-527 / VKM B-1787 / 2291 / W).